Consider the following 354-residue polypeptide: Thiamine thiazole synthase (354 aa).

Substrate contacts are provided by residues A83, 104–105 (EA), G112, and V177. 2,3-didehydroalanine (Cys) is present on C210. Residues D212, H227, M305, and 315–317 (RMR) each bind substrate.

This sequence belongs to the THI4 family. In terms of assembly, homooctamer. It depends on Fe cation as a cofactor. During the catalytic reaction, a sulfide is transferred from Cys-210 to a reaction intermediate, generating a dehydroalanine residue.

It localises to the cytoplasm. The protein localises to the nucleus. The enzyme catalyses [ADP-thiazole synthase]-L-cysteine + glycine + NAD(+) = [ADP-thiazole synthase]-dehydroalanine + ADP-5-ethyl-4-methylthiazole-2-carboxylate + nicotinamide + 3 H2O + 2 H(+). Functionally, involved in biosynthesis of the thiamine precursor thiazole. Catalyzes the conversion of NAD and glycine to adenosine diphosphate 5-(2-hydroxyethyl)-4-methylthiazole-2-carboxylic acid (ADT), an adenylated thiazole intermediate. The reaction includes an iron-dependent sulfide transfer from a conserved cysteine residue of the protein to a thiazole intermediate. The enzyme can only undergo a single turnover, which suggests it is a suicide enzyme. May have additional roles in adaptation to various stress conditions and in DNA damage tolerance. The chain is Thiamine thiazole synthase from Candida albicans (strain WO-1) (Yeast).